A 332-amino-acid polypeptide reads, in one-letter code: Ribosomal RNA small subunit methyltransferase C (332 aa).

This sequence belongs to the methyltransferase superfamily. RsmC family. Monomer.

The protein resides in the cytoplasm. The enzyme catalyses guanosine(1207) in 16S rRNA + S-adenosyl-L-methionine = N(2)-methylguanosine(1207) in 16S rRNA + S-adenosyl-L-homocysteine + H(+). Functionally, specifically methylates the guanine in position 1207 of 16S rRNA in the 30S particle. The sequence is that of Ribosomal RNA small subunit methyltransferase C from Pseudomonas aeruginosa (strain LESB58).